Consider the following 242-residue polypeptide: Probable ABC transporter ATP-binding protein PEB1C (242 aa).

Positions 2 to 236 constitute an ABC transporter domain; the sequence is IELKNVNKYY…PKTERARLFL (235 aa). 34 to 41 serves as a coordination point for ATP; sequence GPSGSGKS.

Belongs to the ABC transporter superfamily.

It localises to the cell inner membrane. Most probably involved, with PEB1, in a binding-protein-dependent transport system for an amino acid. Probably responsible for energy coupling to the transport system. The sequence is that of Probable ABC transporter ATP-binding protein PEB1C (peb1C) from Campylobacter jejuni subsp. jejuni serotype O:23/36 (strain 81-176).